Consider the following 669-residue polypeptide: L-type lectin-domain containing receptor kinase V.9 (669 aa).

An N-terminal signal peptide occupies residues 1–21 (MKFFVLVLLLVLQFFSNKALS). Residues 22–286 (QSEEGEFGFN…RDSRSTSVKK (265 aa)) are Extracellular-facing. The tract at residues 38 to 259 (SGIAITNSKG…SHYILGWTFK (222 aa)) is legume-lectin like. 5 N-linked (GlcNAc...) asparagine glycosylation sites follow: Asn-53, Asn-75, Asn-124, Asn-206, and Asn-261. A helical transmembrane segment spans residues 287-307 (ILAISLSLTSLAILVFLTISY). The Cytoplasmic segment spans residues 308 to 669 (MLFLKRKKLM…FTEPFVSHGR (362 aa)). The Protein kinase domain occupies 344–603 (FRNSELLGKG…LGLFCSHPVA (260 aa)). Residues 350–358 (LGKGGFGKV) and Lys-373 contribute to the ATP site. The active-site Proton acceptor is the Asp-469.

This sequence in the C-terminal section; belongs to the protein kinase superfamily. Ser/Thr protein kinase family. It in the N-terminal section; belongs to the leguminous lectin family.

Its subcellular location is the cell membrane. It catalyses the reaction L-seryl-[protein] + ATP = O-phospho-L-seryl-[protein] + ADP + H(+). The enzyme catalyses L-threonyl-[protein] + ATP = O-phospho-L-threonyl-[protein] + ADP + H(+). This is L-type lectin-domain containing receptor kinase V.9 (LECRK59) from Arabidopsis thaliana (Mouse-ear cress).